A 324-amino-acid polypeptide reads, in one-letter code: tRNA uridine(34) hydroxylase (324 aa).

The region spanning 127–221 (QQEETIVIDA…YGKDPEVQGE (95 aa)) is the Rhodanese domain. Residue cysteine 181 is the Cysteine persulfide intermediate of the active site.

It belongs to the TrhO family.

It carries out the reaction uridine(34) in tRNA + AH2 + O2 = 5-hydroxyuridine(34) in tRNA + A + H2O. Its function is as follows. Catalyzes oxygen-dependent 5-hydroxyuridine (ho5U) modification at position 34 in tRNAs. This is tRNA uridine(34) hydroxylase from Bacillus cytotoxicus (strain DSM 22905 / CIP 110041 / 391-98 / NVH 391-98).